A 208-amino-acid chain; its full sequence is Small ribosomal subunit protein uS4 (208 aa).

The region spanning 98–159 is the S4 RNA-binding domain; the sequence is RRLDNVVYRL…KSRKIVSIND (62 aa).

Belongs to the universal ribosomal protein uS4 family. As to quaternary structure, part of the 30S ribosomal subunit. Contacts protein S5. The interaction surface between S4 and S5 is involved in control of translational fidelity.

In terms of biological role, one of the primary rRNA binding proteins, it binds directly to 16S rRNA where it nucleates assembly of the body of the 30S subunit. Its function is as follows. With S5 and S12 plays an important role in translational accuracy. The polypeptide is Small ribosomal subunit protein uS4 (Pelobacter propionicus (strain DSM 2379 / NBRC 103807 / OttBd1)).